A 391-amino-acid polypeptide reads, in one-letter code: MIGTPYTEGARRAMLLGCGELGKEVAIELQRLGVEVIGVDRYPNAPAMQIAHRSHVINMLDAKALRAVIELEKPHLVIPEIEAIATQTLVEMEAEGLNVVPTARATKLTMDREGIRRLAAETLGLPTSPYFFCDTETEFNQAISKIGVPCVVKPVMSSSGKGQSVIRNVAQSAKAWQYAQEGGRAGGGRVIVEGFIPFDYEITLLTISAVNGIHFCAPIGHRQEDGDYRESWQPQAMSADVLAKSQAIASKVVEALGGYGLFGVELFVKGSDVYFSEVSPRPHDTGLVTLISQDLSEFALHVRAILGLPIPNIHQHGPSASAVVLVEGKSKNIRYQGLAAALAAENTQLRLFAKPEIDGRRRLGVALARDKDIDSAVNKALDSAAKVQVIF.

N(1)-(5-phospho-beta-D-ribosyl)glycinamide is bound by residues 20 to 21 and glutamate 80; that span reads EL. Residues arginine 112, lysine 153, 158 to 163, 193 to 196, and glutamate 201 contribute to the ATP site; these read SSGKGQ and EGFI. An ATP-grasp domain is found at 117–306; it reads RLAAETLGLP…EFALHVRAIL (190 aa). 2 residues coordinate Mg(2+): glutamate 265 and glutamate 277. N(1)-(5-phospho-beta-D-ribosyl)glycinamide is bound by residues aspartate 284, lysine 354, and 361–362; that span reads RR.

The protein belongs to the PurK/PurT family. In terms of assembly, homodimer.

It carries out the reaction N(1)-(5-phospho-beta-D-ribosyl)glycinamide + formate + ATP = N(2)-formyl-N(1)-(5-phospho-beta-D-ribosyl)glycinamide + ADP + phosphate + H(+). It functions in the pathway purine metabolism; IMP biosynthesis via de novo pathway; N(2)-formyl-N(1)-(5-phospho-D-ribosyl)glycinamide from N(1)-(5-phospho-D-ribosyl)glycinamide (formate route): step 1/1. Functionally, involved in the de novo purine biosynthesis. Catalyzes the transfer of formate to 5-phospho-ribosyl-glycinamide (GAR), producing 5-phospho-ribosyl-N-formylglycinamide (FGAR). Formate is provided by PurU via hydrolysis of 10-formyl-tetrahydrofolate. The protein is Formate-dependent phosphoribosylglycinamide formyltransferase of Shewanella oneidensis (strain ATCC 700550 / JCM 31522 / CIP 106686 / LMG 19005 / NCIMB 14063 / MR-1).